Here is a 747-residue protein sequence, read N- to C-terminus: Plakophilin-1 (747 aa).

The required for binding to single stranded DNA stretch occupies residues 1 to 234; it reads MNHSPLKTAL…SFGHSRASSK (234 aa). The segment at 1 to 286 is required for interaction with EIF4A1; sequence MNHSPLKTAL…ESAKQQVYQL (286 aa). Phosphoserine is present on Ser-4. The segment at 48-68 is disordered; sequence TVKRQKSKSSQSSTLSHSNRG. Phosphorylation in this region is required for cytoplasmic localization and protein stabilization regions lie at residues 54–69 and 116–191; these read SKSS…NRGS and RFSS…STCS. Ser-118 is modified (phosphoserine; by PKB/AKT2). Ser-119, Ser-121, and Ser-142 each carry phosphoserine. Residues 160-269 are required for WNT-mediated nuclear localization; the sequence is YCDPRGTLRK…KYQAIGAYYI (110 aa). 9 ARM repeats span residues 243–274, 275–316, 317–359, 360–415, 416–463, 525–556, 557–603, 604–649, and 650–713; these read SGLT…HTCF, QDES…NLVF, RSTT…NLSS, TDEL…KRLG, MREL…NCVA, NYDC…LNLM, GKSK…IARL, LQSG…SHTG, and NTSN…DMWS.

This sequence belongs to the beta-catenin family. In terms of assembly, part of a complex that contains DSG3, PKP1, YAP1 and YWHAG; the complex is required for localization of DSG3 and YAP1 to the cell membrane in keratinocytes. Interacts with DSP. Interacts (via N-terminus) with KRT5/CK5, KRT8/CK8 (via rod domain), KRT15/CK15 and KRT18/CK18 (via rod domain) as part of intermediate filaments. Interacts with VIM (via rod domain). Interacts with DSP. Interacts with DES. Interacts with FXR1; the interaction may facilitate the binding of PKP1 to PKP2, PKP3 and DSP mRNA. Interacts (via N-terminus) with EIF4A1; the interaction promotes EIF4A1 recruitment to the cap-dependent translation complex and EIF4A1 ATPase activity. Interacts with TJP1/ZO-1; the interaction facilitates TJP1/ZO-1 localization to the plasma membrane. Interacts (when phosphorylated) with YWHAG; the interaction results in translocation of PKP1 to the cytoplasm and loss of intercellular adhesion in keratinocytes. Phosphorylated by AKT2; required for interaction with YWHAG and subsequent localization away from desmosomes to the cytoplasm. Phosphorylation of Ser-118 by AKT2 promotes PKP1-driven cap-dependent mRNA translation and decreases intercellular adhesion, phosphorylation is promoted by insulin. Phosphorylation by RIPK4 at the N-terminus is required for its role in differentiation of keratinocytes and DSG1 localization at cell junctions. Expressed in stratified squamous, complex, glandular duct and bladder epithelia (at protein level). As to expression, widely expressed (at protein level).

The protein resides in the cell junction. Its subcellular location is the desmosome. It localises to the nucleus. It is found in the cytoplasm. The protein localises to the perinuclear region. The protein resides in the cell membrane. Its subcellular location is the stress granule. Its function is as follows. A component of desmosome cell-cell junctions which are required for positive regulation of cellular adhesion. Plays a role in desmosome protein expression regulation and localization to the desmosomal plaque, thereby maintaining cell sheet integrity and anchorage of desmosomes to intermediate filaments. Required for localization of DSG3 and YAP1 to the cell membrane in keratinocytes in response to mechanical strain, via the formation of an interaction complex composed of DSG3, YAP1, PKP1 and YWHAG. Positively regulates differentiation of keratinocytes, potentially via promoting localization of DSG1 at desmosome cell junctions. Required for calcium-independent development and maturation of desmosome plaques specifically at lateral cell-cell contacts in differentiating keratinocytes. Plays a role in the maintenance of DSG3 protein abundance, DSG3 clustering and localization of these clusters to the cell membrane in keratinocytes. May also promote keratinocyte proliferation and morphogenesis during postnatal development. Required for tight junction inside-out transepidermal barrier function of the skin. Promotes Wnt-mediated proliferation and differentiation of ameloblasts, via facilitating TJP1/ZO-1 localization to tight junctions. Binds single-stranded DNA (ssDNA), and may thereby play a role in sensing DNA damage and promoting cell survival. Positively regulates cap-dependent translation and as a result cell proliferation, via recruitment of EIF4A1 to the initiation complex and promotion of EIF4A1 ATPase activity. Regulates the mRNA stability and protein abundance of desmosome components PKP2, PKP3, DSC2 and DSP, potentially via its interaction with FXR1. The polypeptide is Plakophilin-1 (PKP1) (Homo sapiens (Human)).